A 151-amino-acid polypeptide reads, in one-letter code: Ribosome maturation factor RimP (151 aa).

It belongs to the RimP family.

Its subcellular location is the cytoplasm. Required for maturation of 30S ribosomal subunits. This chain is Ribosome maturation factor RimP, found in Shewanella frigidimarina (strain NCIMB 400).